The following is a 548-amino-acid chain: Chaperonin GroEL (548 aa).

Residues 30–33, lysine 51, 87–91, glycine 415, 479–481, and aspartate 495 each bind ATP; these read TLGP, DGTTT, and NAA.

It belongs to the chaperonin (HSP60) family. As to quaternary structure, forms a cylinder of 14 subunits composed of two heptameric rings stacked back-to-back. Interacts with the co-chaperonin GroES.

The protein localises to the cytoplasm. It catalyses the reaction ATP + H2O + a folded polypeptide = ADP + phosphate + an unfolded polypeptide.. Its function is as follows. Together with its co-chaperonin GroES, plays an essential role in assisting protein folding. The GroEL-GroES system forms a nano-cage that allows encapsulation of the non-native substrate proteins and provides a physical environment optimized to promote and accelerate protein folding. The sequence is that of Chaperonin GroEL from Sodalis glossinidius (strain morsitans).